The sequence spans 199 residues: Dephospho-CoA kinase (199 aa).

The 196-residue stretch at 4–199 (VLGITGGIAT…KWLEEQIGKK (196 aa)) folds into the DPCK domain. 12-17 (ATGKST) serves as a coordination point for ATP.

This sequence belongs to the CoaE family.

Its subcellular location is the cytoplasm. The enzyme catalyses 3'-dephospho-CoA + ATP = ADP + CoA + H(+). It participates in cofactor biosynthesis; coenzyme A biosynthesis; CoA from (R)-pantothenate: step 5/5. Functionally, catalyzes the phosphorylation of the 3'-hydroxyl group of dephosphocoenzyme A to form coenzyme A. This chain is Dephospho-CoA kinase, found in Enterococcus faecalis (strain ATCC 700802 / V583).